A 200-amino-acid chain; its full sequence is NADH-quinone oxidoreductase subunit C (200 aa).

The protein belongs to the complex I 30 kDa subunit family. As to quaternary structure, NDH-1 is composed of 14 different subunits. Subunits NuoB, C, D, E, F, and G constitute the peripheral sector of the complex.

It is found in the cell inner membrane. The enzyme catalyses a quinone + NADH + 5 H(+)(in) = a quinol + NAD(+) + 4 H(+)(out). In terms of biological role, NDH-1 shuttles electrons from NADH, via FMN and iron-sulfur (Fe-S) centers, to quinones in the respiratory chain. The immediate electron acceptor for the enzyme in this species is believed to be ubiquinone. Couples the redox reaction to proton translocation (for every two electrons transferred, four hydrogen ions are translocated across the cytoplasmic membrane), and thus conserves the redox energy in a proton gradient. The polypeptide is NADH-quinone oxidoreductase subunit C (Agrobacterium fabrum (strain C58 / ATCC 33970) (Agrobacterium tumefaciens (strain C58))).